Here is a 202-residue protein sequence, read N- to C-terminus: Sperm-specific H1/protamine-like protein type 1 (202 aa).

The span at 1–35 (MPSPSRKSRSRSRSRSKSPKRSPAKKARKTPKKPR) shows a compositional bias: basic residues. 2 disordered regions span residues 1 to 46 (MPSP…PTTL) and 104 to 202 (KTSA…QFAL). In terms of domain architecture, H15 spans 41 to 120 (KKPTTLSMIV…GATGSFRVGK (80 aa)). The span at 126–156 (KKAKKAKSPKKKSSKKSKNKSNNAKAKKSPK) shows a compositional bias: basic residues. A compositionally biased stretch (low complexity) spans 177–187 (GARYPFRYQAY).

In terms of processing, OE1 and OE3 are produced by post-translational cleavage of a common precursor. In terms of tissue distribution, sperm.

The protein resides in the nucleus. It localises to the chromosome. Linker histones are implicated in chromatin remodeling and/or transcriptional regulation during spermiogenesis, the process of spermatid maturation into spermatozoa. Protamines substitute for histones in the chromatin of sperm during the haploid phase of spermatogenesis. They compact sperm DNA into a highly condensed, stable and inactive complex. The chain is Sperm-specific H1/protamine-like protein type 1 from Ostrea edulis (Native oyster).